The primary structure comprises 447 residues: D-ribitol-5-phosphate cytidylyltransferase (447 aa).

It belongs to the IspD/TarI cytidylyltransferase family. IspD subfamily. Homodimer.

Its subcellular location is the cytoplasm. The protein resides in the cytosol. The catalysed reaction is D-ribitol 5-phosphate + CTP + H(+) = CDP-L-ribitol + diphosphate. It catalyses the reaction D-ribose 5-phosphate + CTP + H(+) = CDP-D-ribose + diphosphate. It carries out the reaction D-ribulose 5-phosphate + CTP + H(+) = CDP-D-ribulose + diphosphate. Its pathway is protein modification; protein glycosylation. In terms of biological role, cytidylyltransferase required for protein O-linked mannosylation. Catalyzes the formation of CDP-ribitol nucleotide sugar from D-ribitol 5-phosphate. CDP-ribitol is a substrate of FKTN during the biosynthesis of the phosphorylated O-mannosyl trisaccharide (N-acetylgalactosamine-beta-3-N-acetylglucosamine-beta-4-(phosphate-6-)mannose), a carbohydrate structure present in alpha-dystroglycan (DAG1), which is required for binding laminin G-like domain-containing extracellular proteins with high affinity. Shows activity toward other pentose phosphate sugars and mediates formation of CDP-ribulose or CDP-ribose using CTP and ribulose-5-phosphate or ribose-5-phosphate, respectively. Not involved in dolichol production. This Rattus norvegicus (Rat) protein is D-ribitol-5-phosphate cytidylyltransferase (Crppa).